A 156-amino-acid chain; its full sequence is MSKFLLQSHSANACLLTLLLTLASNLDISLANFEHSCNGYMRPHPRGLCGEDLHVIISNLCSSLGGNRRFLAKYMVKRDTENVNDKLRGILLNKKEAFSYLTKREASGSITCECCFNQCRIFELAQYCRLPDHFFSRISRTGRSNSGHAQLEDNFS.

A signal peptide spans 1-31 (MSKFLLQSHSANACLLTLLLTLASNLDISLA). Cystine bridges form between C37-C114, C49-C119, C61-C128, and C112-C115. Positions 79–93 (DTENVNDKLRGILLN) are cleaved as a propeptide — c peptide beta. Positions 96-102 (EAFSYLT) are cleaved as a propeptide — c peptide alpha. Residues 141-156 (TGRSNSGHAQLEDNFS) constitute a propeptide, d peptide. Positions 144 to 156 (SNSGHAQLEDNFS) are cleaved as a propeptide — d peptide short form. E152 carries the post-translational modification 4-carboxyglutamate.

The protein belongs to the insulin family. As to quaternary structure, heterodimer of a B chain or a B chain' and an A chain probably linked by three disulfide bonds. In terms of tissue distribution, expressed in the central region of the cerebral ganglia mostly within the F and C clusters.

The protein resides in the secreted. In terms of biological role, involved in glucose metabolism. The chain is Insulin (PIN) from Aplysia californica (California sea hare).